The sequence spans 161 residues: Protein-export protein SecB (161 aa).

The protein belongs to the SecB family. Homotetramer, a dimer of dimers. One homotetramer interacts with 1 SecA dimer.

The protein localises to the cytoplasm. In terms of biological role, one of the proteins required for the normal export of preproteins out of the cell cytoplasm. It is a molecular chaperone that binds to a subset of precursor proteins, maintaining them in a translocation-competent state. It also specifically binds to its receptor SecA. This is Protein-export protein SecB from Shewanella pealeana (strain ATCC 700345 / ANG-SQ1).